The chain runs to 111 residues: METSAKLKFSRLSPQKARLVADQVRGLPVEKALEILEFSPKKAAAIVRKVLDSAVANAEHNDGADIDALRVARIFVDEGPMLKRIRPRAKGRANRILKRTSHITVTVAEQQ.

Belongs to the universal ribosomal protein uL22 family. Part of the 50S ribosomal subunit.

Functionally, this protein binds specifically to 23S rRNA; its binding is stimulated by other ribosomal proteins, e.g. L4, L17, and L20. It is important during the early stages of 50S assembly. It makes multiple contacts with different domains of the 23S rRNA in the assembled 50S subunit and ribosome. In terms of biological role, the globular domain of the protein is located near the polypeptide exit tunnel on the outside of the subunit, while an extended beta-hairpin is found that lines the wall of the exit tunnel in the center of the 70S ribosome. This is Large ribosomal subunit protein uL22 from Alkalilimnicola ehrlichii (strain ATCC BAA-1101 / DSM 17681 / MLHE-1).